The sequence spans 954 residues: MTEAAAPASDIPPFRYTADLADEIERRWQDTWEREGTFHAPNPTGPLADPEHPRAGAEKLYVLDMFPYPSGAGLHVGHPLGYIGTDCFARYQRMAGRNVLHAMGFDAFGLPAEQYAVQTGTHPRTTTEANIARYKAQLRRLGLAHDERRSVATIDADFYRWTQWVFLQIYNAWYDSSAKRARPIAELVAEFSGGSRRTPDGRPWGELTDAERRAVVDQHRLAYVSQAPVNWCPGLGTVLANEEVTADGRSERGNFPVFKRNLKQWMMRITAYGDRLLDDLEKLDWPEPIKLMQRNWIGRSTGAHIEFPTSAPDSDAEGEPRISVFTTRPDTIFGATYLVLAPEHDLVDTLVPTAWPAGVPQAWTGGQASPREAVAGYRKVAAAKTDLERQAETKEKTGVFIGSYATNPVTGAQIPIFIADYVLAGYGTGAIMAVPGQDERDWAFAEVFDLPIVRTVQPAEGFAGKAYTGDGLAINSATPERGLDLNGLGVAEAKARTIAWLEAGGHGSGAVTYRLRDWLFSRQRYWGEPFPIVYDETGAAIALPEELLPVELPEVDDFAPRTFDPSDAESNPETPLSRRRDWVEVELDLGDGPKRYTRETNVMPQWAGSCWYELRYLDPTNGDRFVDPEAERYWMGPRGEGDCGGTDLYVGGAEHAVLHLLYARFWHKVLYDLGHVSSFEPFRKLFNQGYIQAYAYTDARGAYVPAEEVVERSGTYYLGDVQVNREYGKMGKSLRNVVTPDEMCAAYGADTFRVYEMSMGPLEVSRPWETRAVVGSFRFLQRVWRAIVDERSGASRVVDVPADEATRRLLHRIVDGVRGDMEAMRFNTTIAKLIELTNALTRLPETPREVAEPLVLMLAPFAPHVAEELWRRMGHETSLTYADFPVADPALLVAESVTYPVQVNGKVRGRIEVPADAGQETVRAAALEAVAASLAGKEPRKVIVVPGRMVSVVA.

A 'HIGH' region motif is present at residues 67-78 (PYPSGAGLHVGH). The short motif at 729–733 (KMGKS) is the 'KMSKS' region element. K732 is a binding site for ATP.

The protein belongs to the class-I aminoacyl-tRNA synthetase family.

It localises to the cytoplasm. The enzyme catalyses tRNA(Leu) + L-leucine + ATP = L-leucyl-tRNA(Leu) + AMP + diphosphate. The protein is Leucine--tRNA ligase of Salinispora tropica (strain ATCC BAA-916 / DSM 44818 / JCM 13857 / NBRC 105044 / CNB-440).